We begin with the raw amino-acid sequence, 138 residues long: Cystatin-11 (138 aa).

A signal peptide spans 1 to 26; the sequence is MMAEPWQALQLLLAILLTLMALPYQA. Disulfide bonds link Cys-94–Cys-102 and Cys-115–Cys-135. An N-linked (GlcNAc...) asparagine glycan is attached at Asn-132.

This sequence belongs to the cystatin family. As to expression, detected in the epithelium and lumen of the epididymis, and in sperm (at protein level).

The protein localises to the secreted. Functionally, has antibacterial activity against the Gram-negative bacteria E.coli. May play a role in sperm maturation and fertilization. The protein is Cystatin-11 (CST11) of Homo sapiens (Human).